The following is a 264-amino-acid chain: tRNA (guanine-N(1)-)-methyltransferase (264 aa).

Residues Gly120 and 140 to 145 (IGDYVL) each bind S-adenosyl-L-methionine.

It belongs to the RNA methyltransferase TrmD family. In terms of assembly, homodimer.

The protein localises to the cytoplasm. It catalyses the reaction guanosine(37) in tRNA + S-adenosyl-L-methionine = N(1)-methylguanosine(37) in tRNA + S-adenosyl-L-homocysteine + H(+). Functionally, specifically methylates guanosine-37 in various tRNAs. In Halorhodospira halophila (strain DSM 244 / SL1) (Ectothiorhodospira halophila (strain DSM 244 / SL1)), this protein is tRNA (guanine-N(1)-)-methyltransferase.